The following is a 483-amino-acid chain: NADH-quinone oxidoreductase subunit N (483 aa).

The next 13 helical transmembrane spans lie at 11–31 (ALPE…DLFL), 37–57 (SLIY…TACT), 82–100 (LMMY…QYVS), 110–130 (FALT…QHFL), 164–184 (FVLG…LYGV), 205–225 (AVLV…LGAV), 239–259 (PTAV…AFMI), 268–288 (VLAI…ILIG), 301–321 (MLAY…MSAG), 329–349 (MFYI…MLLL), 372–392 (YAFL…TLGF), 406–426 (GFVG…FYYL), and 446–466 (PIDM…LGMF).

The protein belongs to the complex I subunit 2 family. As to quaternary structure, NDH-1 is composed of 14 different subunits. Subunits NuoA, H, J, K, L, M, N constitute the membrane sector of the complex.

The protein resides in the cell inner membrane. The enzyme catalyses a quinone + NADH + 5 H(+)(in) = a quinol + NAD(+) + 4 H(+)(out). In terms of biological role, NDH-1 shuttles electrons from NADH, via FMN and iron-sulfur (Fe-S) centers, to quinones in the respiratory chain. The immediate electron acceptor for the enzyme in this species is believed to be ubiquinone. Couples the redox reaction to proton translocation (for every two electrons transferred, four hydrogen ions are translocated across the cytoplasmic membrane), and thus conserves the redox energy in a proton gradient. This chain is NADH-quinone oxidoreductase subunit N, found in Methylovorus glucosotrophus (strain SIP3-4).